Reading from the N-terminus, the 299-residue chain is MAATGGGAEDESRSGRSSSEGECAVAPEPLAEAGGLFSFADLGAALGSGAGLPGRAVGRAQSPLRYLQVLWQQDVEPRDELRCKIPAGRLRRAARPHRRLGPTGKEVHALKRLRDSANANDIETVQQLLEDGADPCAADDKGRTALHFASCNGNDQIVQLLLDHGADPNQQDGLGNTPLHLAACTNHVPVITTLLRGGARVDALDRAGRTPLHLAKSKLNILQEGHSQCLEAVRLEVKQIIHMLREYLERLGRHEQRERLDDLCTRLQMTSTKEQVDEVTDLLASFTSLSLQMQSMEKR.

Residues 1–27 form a disordered region; sequence MAATGGGAEDESRSGRSSSEGECAVAP. N-acetylalanine is present on Ala-2. Position 62 is a phosphoserine (Ser-62). Residues 98–116 carry the Nuclear localization signal (NLS) motif; that stretch reads RRLGPTGKEVHALKRLRDS. ANK repeat units follow at residues 108-137, 141-170, 174-203, and 207-239; these read HALKRLRDSANANDIETVQQLLEDGADPCA, KGRTALHFASCNGNDQIVQLLLDHGADPNQ, LGNTPLHLAACTNHVPVITTLLRGGARVDA, and AGRTPLHLAKSKLNILQEGHSQCLEAVRLEVKQ. Residues 140-240 form an LYN-binding region; that stretch reads DKGRTALHFA…EAVRLEVKQI (101 aa). A Nuclear export signal (NES) motif is present at residues 282-292; sequence LLASFTSLSLQ.

As to quaternary structure, interacts (via ankyrin repeat region) with LYN (via SH3-domain) in an activation-independent status of LYN. Forms a multiprotein complex with LYN and HCLS1. Interacts with TSN2, VAV1, DBNL and LASP1.

The protein resides in the nucleus. The protein localises to the cytoplasm. It is found in the midbody. Plays an important role in regulating intracellular signaling events associated with erythroid terminal differentiation. The protein is Ankyrin repeat domain-containing protein 54 (Ankrd54) of Rattus norvegicus (Rat).